The chain runs to 89 residues: Small ribosomal subunit protein uS15 (89 aa).

The segment covering 1–11 has biased composition (basic and acidic residues); the sequence is MSIAAERKAEV. The tract at residues 1–25 is disordered; sequence MSIAAERKAEVIKTSANKPGDTGSP.

It belongs to the universal ribosomal protein uS15 family. In terms of assembly, part of the 30S ribosomal subunit. Forms a bridge to the 50S subunit in the 70S ribosome, contacting the 23S rRNA.

One of the primary rRNA binding proteins, it binds directly to 16S rRNA where it helps nucleate assembly of the platform of the 30S subunit by binding and bridging several RNA helices of the 16S rRNA. Functionally, forms an intersubunit bridge (bridge B4) with the 23S rRNA of the 50S subunit in the ribosome. The protein is Small ribosomal subunit protein uS15 of Nitrobacter winogradskyi (strain ATCC 25391 / DSM 10237 / CIP 104748 / NCIMB 11846 / Nb-255).